Consider the following 536-residue polypeptide: Chaperonin GroEL 2 (536 aa).

ATP is bound by residues 29-32, 86-90, Gly413, 476-478, and Asp492; these read TLGP, DGTTT, and NAA.

Belongs to the chaperonin (HSP60) family. As to quaternary structure, forms a cylinder of 14 subunits composed of two heptameric rings stacked back-to-back. Interacts with the co-chaperonin GroES.

The protein resides in the cytoplasm. The enzyme catalyses ATP + H2O + a folded polypeptide = ADP + phosphate + an unfolded polypeptide.. Together with its co-chaperonin GroES, plays an essential role in assisting protein folding. The GroEL-GroES system forms a nano-cage that allows encapsulation of the non-native substrate proteins and provides a physical environment optimized to promote and accelerate protein folding. This chain is Chaperonin GroEL 2, found in Moorella thermoacetica (strain ATCC 39073 / JCM 9320).